Here is a 527-residue protein sequence, read N- to C-terminus: Acyl-coenzyme A thioesterase 4, mitochondrial (527 aa).

Residues methionine 1–phenylalanine 75 constitute a mitochondrion transit peptide. 2 HotDog ACOT-type domains span residues isoleucine 172–lysine 294 and lysine 370–alanine 487.

Belongs to the acyl coenzyme A hydrolase family. In terms of tissue distribution, mostly expressed at low levels in glandular trichomes (lupulin glands), and, to a lower extent, in stems, leaves, flowers and cones.

Its subcellular location is the mitochondrion. It carries out the reaction 2-methylpropanoyl-CoA + H2O = 2-methylpropanoate + CoA + H(+). The enzyme catalyses propanoyl-CoA + H2O = propanoate + CoA + H(+). It catalyses the reaction octanoyl-CoA + H2O = octanoate + CoA + H(+). The catalysed reaction is butanoyl-CoA + H2O = butanoate + CoA + H(+). It carries out the reaction 3-methylbutanoyl-CoA + H2O = 3-methylbutanoate + CoA + H(+). The enzyme catalyses 2-methylbutanoyl-CoA + H2O = 2-methylbutanoate + CoA + H(+). Its function is as follows. Acyl-CoA thioesterases are a group of enzymes that catalyze the hydrolysis of acyl-CoAs to the free fatty acid and coenzyme A (CoASH), providing the potential to regulate intracellular levels of acyl-CoAs, free fatty acids and CoASH. Active on acyl CoAs with short chains (propanoyl-CoA and butanoyl-CoA), branched short chains (2-methylpropanoyl-CoA, 2-methylbutanoyl-CoA and 3-methylbutanoyl-CoA) and medium chains (octanoyl-CoA). The chain is Acyl-coenzyme A thioesterase 4, mitochondrial from Humulus lupulus (European hop).